The primary structure comprises 777 residues: 5-methyltetrahydropteroyltriglutamate--homocysteine methyltransferase (777 aa).

5-methyltetrahydropteroyltri-L-glutamate is bound by residues arginine 17–lysine 20 and lysine 132. L-homocysteine contacts are provided by residues isoleucine 455–serine 457 and glutamate 508. L-methionine is bound by residues isoleucine 455–serine 457 and glutamate 508. Residues arginine 539–cysteine 540 and tryptophan 585 contribute to the 5-methyltetrahydropteroyltri-L-glutamate site. Aspartate 623 is an L-homocysteine binding site. Aspartate 623 is an L-methionine binding site. Residue glutamate 629 coordinates 5-methyltetrahydropteroyltri-L-glutamate. The Zn(2+) site is built by histidine 665, cysteine 667, and glutamate 689. The active-site Proton donor is histidine 718. Cysteine 750 lines the Zn(2+) pocket.

The protein belongs to the vitamin-B12 independent methionine synthase family. Zn(2+) serves as cofactor.

The enzyme catalyses 5-methyltetrahydropteroyltri-L-glutamate + L-homocysteine = tetrahydropteroyltri-L-glutamate + L-methionine. It functions in the pathway amino-acid biosynthesis; L-methionine biosynthesis via de novo pathway; L-methionine from L-homocysteine (MetE route): step 1/1. In terms of biological role, catalyzes the transfer of a methyl group from 5-methyltetrahydrofolate to homocysteine resulting in methionine formation. This Caulobacter vibrioides (strain ATCC 19089 / CIP 103742 / CB 15) (Caulobacter crescentus) protein is 5-methyltetrahydropteroyltriglutamate--homocysteine methyltransferase.